A 244-amino-acid chain; its full sequence is Nicotinamidase 1 (244 aa).

This sequence belongs to the isochorismatase family. As to expression, expressed in roots and stems, and at lower levels in flowers, siliques and leaves.

It carries out the reaction nicotinamide + H2O = nicotinate + NH4(+). The protein operates within cofactor biosynthesis; nicotinate biosynthesis; nicotinate from nicotinamide: step 1/1. Catalyzes the deamidation of nicotinamide, an early step in the NAD(+) salvage pathway. Prevents the accumulation of intracellular nicotinamide, a known inhibitor of poly(ADP-ribose) polymerases (PARP enzymes). In Arabidopsis thaliana (Mouse-ear cress), this protein is Nicotinamidase 1.